Consider the following 269-residue polypeptide: Flagellar brake protein YcgR (269 aa).

Residues 134–254 form the PilZ domain; that stretch reads QRRNFYRVTT…SRLLIQRYIT (121 aa).

This sequence belongs to the YcgR family. Monomer. Interacts with the flagellar basal bodies.

The protein localises to the bacterial flagellum basal body. Acts as a flagellar brake, regulating swimming and swarming in a bis-(3'-5') cyclic diguanylic acid (c-di-GMP)-dependent manner. Binds 1 c-di-GMP dimer per subunit. Increasing levels of c-di-GMP lead to decreased motility. This is Flagellar brake protein YcgR from Nitrosomonas eutropha (strain DSM 101675 / C91 / Nm57).